A 629-amino-acid chain; its full sequence is Iron multicopper oxidase fer1 (629 aa).

A signal peptide spans 1–29 (MVAPQRRTVMPALGLLASSLCSLLLTANA). 2 consecutive Plastocyanin-like domains span residues 44 to 164 (VNPD…IHPD) and 175 to 338 (DDYT…TISY). Asparagine 58 and asparagine 69 each carry an N-linked (GlcNAc...) asparagine glycan. Histidine 91 and histidine 93 together coordinate Cu cation. A glycan (N-linked (GlcNAc...) asparagine) is linked at asparagine 98. Cu cation contacts are provided by histidine 144 and histidine 146. Asparagine 188, asparagine 222, asparagine 236, asparagine 253, asparagine 303, asparagine 331, and asparagine 398 each carry an N-linked (GlcNAc...) asparagine glycan. The region spanning 401–537 (YVAPQVPALF…LASIFIEAPD (137 aa)) is the Plastocyanin-like 3 domain. Cu cation is bound by residues histidine 452, histidine 455, and histidine 457. Residue asparagine 482 is glycosylated (N-linked (GlcNAc...) asparagine). Residues histidine 517, cysteine 518, histidine 519, and histidine 523 each coordinate Cu cation. The N-linked (GlcNAc...) asparagine glycan is linked to asparagine 569. The chain crosses the membrane as a helical span at residues 592-612 (AIAAFTGCIITGLLGLATVVV).

This sequence belongs to the multicopper oxidase family. Requires Cu cation as cofactor.

It localises to the cell membrane. In terms of biological role, iron transport multicopper oxidase, which is required for Fe(2+) high affinity uptake. May be required to oxidize Fe(2+) and release it from the transporter. Essential component of copper-dependent iron transport. The chain is Iron multicopper oxidase fer1 from Mycosarcoma maydis (Corn smut fungus).